The chain runs to 320 residues: Acyl-coenzyme A thioesterase 8 (320 aa).

Residues Asp233, Ser255, and Gln305 each act as charge relay system in the active site. The Microbody targeting signal signature appears at 318 to 320; sequence SKL.

The protein belongs to the C/M/P thioester hydrolase family. In terms of assembly, homodimer.

The protein localises to the peroxisome matrix. The enzyme catalyses choloyl-CoA + H2O = cholate + CoA + H(+). The catalysed reaction is chenodeoxycholoyl-CoA + H2O = chenodeoxycholate + CoA + H(+). It catalyses the reaction acetyl-CoA + H2O = acetate + CoA + H(+). It carries out the reaction butanoyl-CoA + H2O = butanoate + CoA + H(+). The enzyme catalyses hexanoyl-CoA + H2O = hexanoate + CoA + H(+). The catalysed reaction is octanoyl-CoA + H2O = octanoate + CoA + H(+). It catalyses the reaction decanoyl-CoA + H2O = decanoate + CoA + H(+). It carries out the reaction dodecanoyl-CoA + H2O = dodecanoate + CoA + H(+). The enzyme catalyses tetradecanoyl-CoA + H2O = tetradecanoate + CoA + H(+). The catalysed reaction is 4,8-dimethylnonanoyl-CoA + H2O = 4,8-dimethylnonanoate + CoA + H(+). It catalyses the reaction 2,6-dimethylheptanoyl-CoA + H2O = 2,6-dimethylheptanoate + CoA + H(+). It carries out the reaction malonyl-CoA + H2O = malonate + CoA + H(+). The enzyme catalyses acetoacetyl-CoA + H2O = acetoacetate + CoA + H(+). The catalysed reaction is propanoyl-CoA + H2O = propanoate + CoA + H(+). It catalyses the reaction succinyl-CoA + H2O = succinate + CoA + H(+). It carries out the reaction glutaryl-CoA + H2O = glutarate + CoA + H(+). The enzyme catalyses hexanedioyl-CoA + H2O = hexanedioate + CoA + H(+). The catalysed reaction is octanedioyl-CoA + H2O = octanedioate + CoA + H(+). It catalyses the reaction decanedioyl-CoA + H2O = decanedioate + CoA + H(+). It carries out the reaction dodecanedioyl-CoA + H2O = dodecanedioate + CoA + H(+). The enzyme catalyses (9Z)-tetradecenoyl-CoA + H2O = (9Z)-tetradecenoate + CoA + H(+). The catalysed reaction is hexadecanoyl-CoA + H2O = hexadecanoate + CoA + H(+). It catalyses the reaction (9Z)-hexadecenoyl-CoA + H2O = (9Z)-hexadecenoate + CoA + H(+). It carries out the reaction octadecanoyl-CoA + H2O = octadecanoate + CoA + H(+). The enzyme catalyses (9Z)-octadecenoyl-CoA + H2O = (9Z)-octadecenoate + CoA + H(+). The catalysed reaction is (9Z,12Z)-octadecadienoyl-CoA + H2O = (9Z,12Z)-octadecadienoate + CoA + H(+). It catalyses the reaction eicosanoyl-CoA + H2O = eicosanoate + CoA + H(+). It carries out the reaction (5Z,8Z,11Z,14Z)-eicosatetraenoyl-CoA + H2O = (5Z,8Z,11Z,14Z)-eicosatetraenoate + CoA + H(+). The enzyme catalyses (3S)-3-hydroxy-3-methylglutaryl-CoA + H2O = 3-hydroxy-3-methylglutarate + CoA + H(+). The catalysed reaction is 3alpha,7alpha,12alpha-trihydroxy-5beta-cholestan-26-oyl-CoA + H2O = 3alpha,7alpha,12alpha-trihydroxy-5beta-cholestan-26-oate + CoA + H(+). It catalyses the reaction 2-methyloctadecanoyl-CoA + H2O = 2-methyloctadecanoate + CoA + H(+). It carries out the reaction prostaglandin F2alpha-CoA + H2O = prostaglandin F2alpha + CoA + H(+). With respect to regulation, inhibited by CoASH (IC(50)=10-15 uM). Also inhibited by cysteine-reactive agents. Catalyzes the hydrolysis of acyl-CoAs into free fatty acids and coenzyme A (CoASH), regulating their respective intracellular levels. Displays no strong substrate specificity with respect to the carboxylic acid moiety of Acyl-CoAs. Hydrolyzes medium length (C2 to C20) straight-chain, saturated and unsaturated acyl-CoAS but is inactive towards substrates with longer aliphatic chains. Moreover, it catalyzes the hydrolysis of CoA esters of bile acids, such as choloyl-CoA and chenodeoxycholoyl-CoA and competes with bile acid CoA:amino acid N-acyltransferase (BAAT). Is also able to hydrolyze CoA esters of dicarboxylic acids. It is involved in the metabolic regulation of peroxisome proliferation. The sequence is that of Acyl-coenzyme A thioesterase 8 (Acot8) from Rattus norvegicus (Rat).